Consider the following 177-residue polypeptide: Ecotin (177 aa).

Residues 1-23 (MQASIQNRIFFGLVVLWSTTVLE) form the signal peptide. Cys-83 and Cys-122 form a disulfide bridge.

This sequence belongs to the protease inhibitor I11 (ecotin) family. Homodimer.

The protein localises to the periplasm. Functionally, general inhibitor of family S1 serine proteases. This chain is Ecotin, found in Prochlorococcus marinus (strain MIT 9313).